The primary structure comprises 240 residues: Proteasome subunit alpha (240 aa).

It belongs to the peptidase T1A family. As to quaternary structure, the 20S proteasome core is composed of 14 alpha and 14 beta subunits that assemble into four stacked heptameric rings, resulting in a barrel-shaped structure. The two inner rings, each composed of seven catalytic beta subunits, are sandwiched by two outer rings, each composed of seven alpha subunits. The catalytic chamber with the active sites is on the inside of the barrel. Has a gated structure, the ends of the cylinder being occluded by the N-termini of the alpha-subunits. Is capped at one or both ends by the proteasome regulatory ATPase, PAN.

It is found in the cytoplasm. Its activity is regulated as follows. The formation of the proteasomal ATPase PAN-20S proteasome complex, via the docking of the C-termini of PAN into the intersubunit pockets in the alpha-rings, triggers opening of the gate for substrate entry. Interconversion between the open-gate and close-gate conformations leads to a dynamic regulation of the 20S proteasome proteolysis activity. In terms of biological role, component of the proteasome core, a large protease complex with broad specificity involved in protein degradation. The polypeptide is Proteasome subunit alpha (Methanoregula boonei (strain DSM 21154 / JCM 14090 / 6A8)).